We begin with the raw amino-acid sequence, 117 residues long: Large ribosomal subunit protein uL22 (117 aa).

It belongs to the universal ribosomal protein uL22 family. As to quaternary structure, part of the 50S ribosomal subunit.

Its function is as follows. This protein binds specifically to 23S rRNA; its binding is stimulated by other ribosomal proteins, e.g. L4, L17, and L20. It is important during the early stages of 50S assembly. It makes multiple contacts with different domains of the 23S rRNA in the assembled 50S subunit and ribosome. In terms of biological role, the globular domain of the protein is located near the polypeptide exit tunnel on the outside of the subunit, while an extended beta-hairpin is found that lines the wall of the exit tunnel in the center of the 70S ribosome. This chain is Large ribosomal subunit protein uL22, found in Lactobacillus helveticus (strain DPC 4571).